The primary structure comprises 309 residues: Type II methyltransferase M.HindIII (309 aa).

It belongs to the N(4)/N(6)-methyltransferase family.

It catalyses the reaction a 2'-deoxyadenosine in DNA + S-adenosyl-L-methionine = an N(6)-methyl-2'-deoxyadenosine in DNA + S-adenosyl-L-homocysteine + H(+). Functionally, a beta subtype methylase that recognizes the double-stranded sequence 5'-AAGCTT-3', methylates A-1 on both strands, and protects the DNA from cleavage by the HindIII endonuclease. This Haemophilus influenzae (strain ATCC 51907 / DSM 11121 / KW20 / Rd) protein is Type II methyltransferase M.HindIII.